The following is a 584-amino-acid chain: DNA ligase (584 aa).

ATP is bound at residue Glu249. The N6-AMP-lysine intermediate role is filled by Lys251. ATP is bound by residues Arg256, Arg271, Glu301, Phe341, Arg416, and Lys422.

It belongs to the ATP-dependent DNA ligase family. It depends on Mg(2+) as a cofactor.

The catalysed reaction is ATP + (deoxyribonucleotide)n-3'-hydroxyl + 5'-phospho-(deoxyribonucleotide)m = (deoxyribonucleotide)n+m + AMP + diphosphate.. Functionally, DNA ligase that seals nicks in double-stranded DNA during DNA replication, DNA recombination and DNA repair. In Pyrobaculum neutrophilum (strain DSM 2338 / JCM 9278 / NBRC 100436 / V24Sta) (Thermoproteus neutrophilus), this protein is DNA ligase.